A 717-amino-acid polypeptide reads, in one-letter code: Fatty acid oxidation complex subunit alpha (717 aa).

The tract at residues 1–190 (MIHAGNAITV…KDGAVDAVVS (190 aa)) is enoyl-CoA hydratase/isomerase. Position 298 (Asp298) interacts with substrate. The interval 313–717 (HPVNQAAVLG…MAENNKKFYG (405 aa)) is 3-hydroxyacyl-CoA dehydrogenase. NAD(+) contacts are provided by residues Met326, Asp345, 402 to 404 (VTE), Lys409, and Ser431. The active-site For 3-hydroxyacyl-CoA dehydrogenase activity is His452. Asn455 is an NAD(+) binding site. A substrate-binding site is contributed by Asn502.

This sequence in the N-terminal section; belongs to the enoyl-CoA hydratase/isomerase family. In the C-terminal section; belongs to the 3-hydroxyacyl-CoA dehydrogenase family. In terms of assembly, heterotetramer of two alpha chains (FadB) and two beta chains (FadA).

It catalyses the reaction a (3S)-3-hydroxyacyl-CoA + NAD(+) = a 3-oxoacyl-CoA + NADH + H(+). The enzyme catalyses a (3S)-3-hydroxyacyl-CoA = a (2E)-enoyl-CoA + H2O. The catalysed reaction is a 4-saturated-(3S)-3-hydroxyacyl-CoA = a (3E)-enoyl-CoA + H2O. It carries out the reaction (3S)-3-hydroxybutanoyl-CoA = (3R)-3-hydroxybutanoyl-CoA. It catalyses the reaction a (3Z)-enoyl-CoA = a 4-saturated (2E)-enoyl-CoA. The enzyme catalyses a (3E)-enoyl-CoA = a 4-saturated (2E)-enoyl-CoA. The protein operates within lipid metabolism; fatty acid beta-oxidation. Its function is as follows. Involved in the aerobic and anaerobic degradation of long-chain fatty acids via beta-oxidation cycle. Catalyzes the formation of 3-oxoacyl-CoA from enoyl-CoA via L-3-hydroxyacyl-CoA. It can also use D-3-hydroxyacyl-CoA and cis-3-enoyl-CoA as substrate. This Acinetobacter baylyi (strain ATCC 33305 / BD413 / ADP1) protein is Fatty acid oxidation complex subunit alpha.